The sequence spans 296 residues: Probable endonuclease 4 (296 aa).

9 residues coordinate Zn(2+): His-69, His-109, Glu-160, Asp-194, His-197, His-231, Asp-244, His-246, and Glu-276.

This sequence belongs to the AP endonuclease 2 family. It depends on Zn(2+) as a cofactor.

The catalysed reaction is Endonucleolytic cleavage to 5'-phosphooligonucleotide end-products.. In terms of biological role, endonuclease IV plays a role in DNA repair. It cleaves phosphodiester bonds at apurinic or apyrimidinic (AP) sites, generating a 3'-hydroxyl group and a 5'-terminal sugar phosphate. This is Probable endonuclease 4 from Sulfurovum sp. (strain NBC37-1).